Consider the following 201-residue polypeptide: Ubiquitin-conjugating enzyme E2 E2 (201 aa).

Over residues Met1–Asp10 the composition is skewed to basic and acidic residues. Positions Met1–Thr55 are disordered. Ser2 carries the post-translational modification N-acetylserine. Phosphoserine is present on residues Ser11, Ser15, Ser18, and Ser19. The segment covering Gly21–Ile45 has biased composition (basic and acidic residues). Positions Ser46–Thr55 are enriched in low complexity. Residues Thr55–Thr201 enclose the UBC core domain. Cys139 (glycyl thioester intermediate) is an active-site residue.

It belongs to the ubiquitin-conjugating enzyme family. In terms of processing, autoubiquitinated in vitro.

It catalyses the reaction S-ubiquitinyl-[E1 ubiquitin-activating enzyme]-L-cysteine + [E2 ubiquitin-conjugating enzyme]-L-cysteine = [E1 ubiquitin-activating enzyme]-L-cysteine + S-ubiquitinyl-[E2 ubiquitin-conjugating enzyme]-L-cysteine.. Its pathway is protein modification; protein ubiquitination. In terms of biological role, accepts ubiquitin from the E1 complex and catalyzes its covalent attachment to other proteins. In vitro catalyzes 'Lys-11'- and 'Lys-48'-, as well as 'Lys-63'-linked polyubiquitination. Catalyzes the ISGylation of influenza A virus NS1 protein. The sequence is that of Ubiquitin-conjugating enzyme E2 E2 from Homo sapiens (Human).